A 55-amino-acid polypeptide reads, in one-letter code: Large ribosomal subunit protein bL33 (55 aa).

The protein belongs to the bacterial ribosomal protein bL33 family.

In Rhizorhabdus wittichii (strain DSM 6014 / CCUG 31198 / JCM 15750 / NBRC 105917 / EY 4224 / RW1) (Sphingomonas wittichii), this protein is Large ribosomal subunit protein bL33.